The primary structure comprises 352 residues: Biotin synthase (352 aa).

Residues 44–262 (NRVQVSTLLS…LAVARIMMPK (219 aa)) enclose the Radical SAM core domain. [4Fe-4S] cluster is bound by residues Cys59, Cys63, and Cys66. [2Fe-2S] cluster is bound by residues Cys103, Cys134, Cys194, and Arg266.

Belongs to the radical SAM superfamily. Biotin synthase family. Homodimer. The cofactor is [4Fe-4S] cluster. Requires [2Fe-2S] cluster as cofactor.

The enzyme catalyses (4R,5S)-dethiobiotin + (sulfur carrier)-SH + 2 reduced [2Fe-2S]-[ferredoxin] + 2 S-adenosyl-L-methionine = (sulfur carrier)-H + biotin + 2 5'-deoxyadenosine + 2 L-methionine + 2 oxidized [2Fe-2S]-[ferredoxin]. It participates in cofactor biosynthesis; biotin biosynthesis; biotin from 7,8-diaminononanoate: step 2/2. Its function is as follows. Catalyzes the conversion of dethiobiotin (DTB) to biotin by the insertion of a sulfur atom into dethiobiotin via a radical-based mechanism. This chain is Biotin synthase, found in Pseudomonas aeruginosa (strain LESB58).